The following is a 116-amino-acid chain: Flagellar transcriptional regulator FlhD (116 aa).

It belongs to the FlhD family. Homodimer; disulfide-linked. Forms a heterohexamer composed of two FlhC and four FlhD subunits. Each FlhC binds a FlhD dimer, forming a heterotrimer, and a hexamer assembles by dimerization of two heterotrimers.

It is found in the cytoplasm. Functions in complex with FlhC as a master transcriptional regulator that regulates transcription of several flagellar and non-flagellar operons by binding to their promoter region. Activates expression of class 2 flagellar genes, including fliA, which is a flagellum-specific sigma factor that turns on the class 3 genes. Also regulates genes whose products function in a variety of physiological pathways. This chain is Flagellar transcriptional regulator FlhD, found in Enterobacter sp. (strain 22).